The chain runs to 397 residues: RNA polymerase II elongation factor ELL3 (397 aa).

Disordered stretches follow at residues 164-219 (VSDP…KRSV) and 237-284 (VPSP…PEDI). Residues 168–178 (LASNQGQSLPG) show a composition bias toward polar residues. A compositionally biased stretch (acidic residues) spans 250-262 (QEGEDWEQEDEDM). The segment covering 269–281 (SSSVQEDSESPSP) has biased composition (low complexity). Positions 285–395 (PDYLLQYRAI…LILEFEEKNR (111 aa)) constitute an OCEL domain.

It belongs to the ELL/occludin family. As to quaternary structure, interacts with AFF4. Component of the super elongation complex (SEC), at least composed of EAF1, EAF2, CDK9, MLLT3/AF9, AFF (AFF1 or AFF4), the P-TEFb complex and ELL (ELL, ELL2 or ELL3). Component of the little elongation complex (LEC), at least composed of ELL (ELL, ELL2 or ELL3), ZC3H8, ICE1 and ICE2. Testis specific.

The protein localises to the nucleus. Functionally, enhancer-binding elongation factor that specifically binds enhancers in embryonic stem cells (ES cells), marks them, and is required for their future activation during stem cell specification. Does not only bind to enhancer regions of active genes, but also marks the enhancers that are in a poised or inactive state in ES cells and is required for establishing proper RNA polymerase II occupancy at developmentally regulated genes in a cohesin-dependent manner. Probably required for priming developmentally regulated genes for later recruitment of the super elongation complex (SEC), for transcriptional activation during differentiation. Required for recruitment of P-TEFb within SEC during differentiation. Probably preloaded on germ cell chromatin, suggesting that it may prime gene activation by marking enhancers as early as in the germ cells. Promoting epithelial-mesenchymal transition (EMT). Elongation factor component of the super elongation complex (SEC), a complex required to increase the catalytic rate of RNA polymerase II transcription by suppressing transient pausing by the polymerase at multiple sites along the DNA. Component of the little elongation complex (LEC), a complex required to regulate small nuclear RNA (snRNA) gene transcription by RNA polymerase II and III. This Homo sapiens (Human) protein is RNA polymerase II elongation factor ELL3 (ELL3).